The sequence spans 200 residues: Molybdopterin synthase catalytic subunit (200 aa).

A compositionally biased stretch (polar residues) spans 16–30 (KLPSSHQSVEDSASE). A disordered region spans residues 16–43 (KLPSSHQSVEDSASEPSGYEAKDPPQDT). Ser-20 carries the phosphoserine modification. Residues 154–155 (HR), Lys-170, and 177–179 (KKE) contribute to the substrate site.

The protein belongs to the MoaE family. MOCS2B subfamily. Heterotetramer; composed of 2 small (MOCS2A) and 2 large (MOCS2B) subunits.

The protein localises to the cytoplasm. It localises to the cytosol. The catalysed reaction is 2 [molybdopterin-synthase sulfur-carrier protein]-C-terminal-Gly-aminoethanethioate + cyclic pyranopterin phosphate + H2O = molybdopterin + 2 [molybdopterin-synthase sulfur-carrier protein]-C-terminal Gly-Gly + 2 H(+). It participates in cofactor biosynthesis; molybdopterin biosynthesis. Its function is as follows. Catalytic subunit of the molybdopterin synthase complex, a complex that catalyzes the conversion of precursor Z into molybdopterin. Acts by mediating the incorporation of 2 sulfur atoms from thiocarboxylated MOCS2A into precursor Z to generate a dithiolene group. In Rattus norvegicus (Rat), this protein is Molybdopterin synthase catalytic subunit.